Here is a 799-residue protein sequence, read N- to C-terminus: Heat shock protein 90-6, mitochondrial (799 aa).

The N-terminal 48 residues, 1 to 48 (MIRLSKRSVSTLLRSGNQSFRIAAAASTSRSSPSATDVKRSDTESRWY), are a transit peptide targeting the mitochondrion. Over residues 23–35 (AAAASTSRSSPSA) the composition is skewed to low complexity. Residues 23–61 (AAAASTSRSSPSATDVKRSDTESRWYSSLTNGQSKNSGS) form a disordered region. Positions 46-61 (RWYSSLTNGQSKNSGS) are enriched in polar residues. Residues Glu124, Asn128, Asp170, Met175, 190 to 191 (SG), 214 to 219 (QFGVGF), and Thr269 each bind ATP. The interval 314-337 (EVEVEDDPTETKKDDQDDQTEKKK) is disordered. Residues 322–334 (TETKKDDQDDQTE) show a composition bias toward basic and acidic residues. Arg464 contacts ATP. Residues 766–777 (SPEVQPQQQQMA) show a composition bias toward polar residues. The interval 766–799 (SPEVQPQQQQMAHSHDAETFEAEVVEPVEVDGKK) is disordered. Acidic residues predominate over residues 784 to 799 (TFEAEVVEPVEVDGKK).

The protein belongs to the heat shock protein 90 family. Interacts with P23-1.

Its subcellular location is the mitochondrion. In terms of biological role, molecular chaperone which stabilizes unfolding protein intermediates and functions as a folding molecular chaperone that assists the non-covalent folding of proteins in an ATP-dependent manner. This chain is Heat shock protein 90-6, mitochondrial, found in Arabidopsis thaliana (Mouse-ear cress).